A 308-amino-acid chain; its full sequence is 2-dehydro-3-deoxy-phosphogluconate/2-dehydro-3-deoxy-6-phosphogalactonate aldolase (308 aa).

Residues 57–58 (TT), 144–146 (YNY), and 169–171 (KDT) contribute to the substrate site. Catalysis depends on Lys169, which acts as the Schiff-base intermediate with substrate.

This sequence belongs to the DapA family. KDPG aldolase subfamily. As to quaternary structure, homotetramer; dimer of dimers.

It carries out the reaction 2-dehydro-3-deoxy-6-phospho-D-gluconate = D-glyceraldehyde 3-phosphate + pyruvate. The enzyme catalyses 2-dehydro-3-deoxy-6-phospho-D-galactonate = D-glyceraldehyde 3-phosphate + pyruvate. It participates in carbohydrate acid metabolism; 2-dehydro-3-deoxy-D-gluconate degradation; D-glyceraldehyde 3-phosphate and pyruvate from 2-dehydro-3-deoxy-D-gluconate: step 2/2. Its function is as follows. Involved in the degradation of glucose and galactose via the Entner-Doudoroff pathway. Catalyzes the reversible cleavage of 2-keto-3-deoxy-6-phosphogluconate (KDPG) and 2-keto-3-deoxygluconate (KDG) forming pyruvate and glyceraldehyde 3-phosphate or glyceraldehyde, respectively. It is also able to catalyze the reversible cleavage of 2-keto-3-deoxy-6-phosphogalactonate (KDPGal) and 2-keto-3-deoxygalactonate (KDGal). This Saccharolobus solfataricus (strain ATCC 35092 / DSM 1617 / JCM 11322 / P2) (Sulfolobus solfataricus) protein is 2-dehydro-3-deoxy-phosphogluconate/2-dehydro-3-deoxy-6-phosphogalactonate aldolase (eda).